The chain runs to 62 residues: High-potential iron-sulfur protein (62 aa).

[4Fe-4S] cluster contacts are provided by Cys22, Cys25, Cys40, and Cys55.

The protein belongs to the high-potential iron-sulfur protein (HiPIP) family. In terms of assembly, homodimer.

Functionally, specific class of high-redox-potential 4Fe-4S ferredoxins. Functions in anaerobic electron transport in most purple and in some other photosynthetic bacteria and in at least one genus (Paracoccus) of halophilic, denitrifying bacteria. The polypeptide is High-potential iron-sulfur protein (hip) (Rhodocyclus tenuis (Rhodospirillum tenue)).